The sequence spans 387 residues: Protein NDRG3 (387 aa).

The disordered stretch occupies residues 329–387 (PSASMTRLVRSRTHSASSSGSMEMPRSRSHTSNAQLQSTSNNSLSNQIQETPHTIELSC). A compositionally biased stretch (low complexity) spans 359 to 377 (TSNAQLQSTSNNSLSNQIQ).

The protein belongs to the NDRG family.

The chain is Protein NDRG3 from Xenopus tropicalis (Western clawed frog).